The following is an 872-amino-acid chain: Alanine--tRNA ligase (872 aa).

Residues His563, His567, Cys665, and His669 each contribute to the Zn(2+) site.

This sequence belongs to the class-II aminoacyl-tRNA synthetase family. It depends on Zn(2+) as a cofactor.

The protein resides in the cytoplasm. The enzyme catalyses tRNA(Ala) + L-alanine + ATP = L-alanyl-tRNA(Ala) + AMP + diphosphate. Catalyzes the attachment of alanine to tRNA(Ala) in a two-step reaction: alanine is first activated by ATP to form Ala-AMP and then transferred to the acceptor end of tRNA(Ala). Also edits incorrectly charged Ser-tRNA(Ala) and Gly-tRNA(Ala) via its editing domain. The chain is Alanine--tRNA ligase from Bacteroides fragilis (strain ATCC 25285 / DSM 2151 / CCUG 4856 / JCM 11019 / LMG 10263 / NCTC 9343 / Onslow / VPI 2553 / EN-2).